The sequence spans 225 residues: UPF0758 protein BP1235 (225 aa).

The region spanning 103-225 is the MPN domain; the sequence is ALANPDLVRR…TVSMAAQGHL (123 aa). Zn(2+) is bound by residues His-174, His-176, and Asp-187. Positions 174–187 match the JAMM motif motif; the sequence is HNHPGGTAAASAAD.

Belongs to the UPF0758 family.

This is UPF0758 protein BP1235 from Bordetella pertussis (strain Tohama I / ATCC BAA-589 / NCTC 13251).